Consider the following 444-residue polypeptide: U4/U6 snRNA-associated-splicing factor PRP24 (444 aa).

Over residues M1–D16 the composition is skewed to basic and acidic residues. The interval M1–K29 is disordered. S19 carries the phosphoserine modification. RRM domains lie at T41–E116, C117–P195, and R210–K289.

As to quaternary structure, monomer. Interacts with U6 snRNA SNR6 and the LSM2-8 complex (small nuclear RNA); to chaperone formation of the U4/U6-U5 tri-snRNP (small nuclear ribonucleoprotein) assembly, the protein is displaced from the U4/U6 snRNP once pairing is complete.

The protein resides in the nucleus. In terms of biological role, functions as a recycling factor of the spliceosome, a machinery that forms on each precursor-messenger RNA (pre-mRNA) and catalyzes the removal of introns. Chaperones the re-annealing of U4 and U6 snRNAs (small nuclear RNAs) released from previous rounds of splicing, an initial step in reforming the U4/U6-U5 tri-snRNP (small nuclear ribonucleoprotein) that can reassemble into another spliceosome complex; this step involves binding U6 and facilitating the unwinding of the U6 internal stem loop, followed by base-pairing of U6 to U4. In Saccharomyces cerevisiae (strain ATCC 204508 / S288c) (Baker's yeast), this protein is U4/U6 snRNA-associated-splicing factor PRP24 (PRP24).